A 230-amino-acid chain; its full sequence is Ubiquitin carboxyl-terminal hydrolase isozyme L3 (230 aa).

A UCH catalytic domain is found at 5–229 (RWLPLEANPE…LRFNAIALSA (225 aa)). Positions 8 to 13 (PLEANP) are interaction with ubiquitin. The active-site Nucleophile is the Cys-95. The residue at position 130 (Ser-130) is a Phosphoserine. The tract at residues 152–159 (AHEGQTEA) is interaction with ubiquitin. Crossover loop which restricts access of large ubiquitin adducts to the active site. His-169 acts as the Proton donor in catalysis. Positions 219–224 (ELRFNA) are interaction with ubiquitin.

It belongs to the peptidase C12 family. In terms of assembly, preferentially binds diubiquitin; the interaction does not hydrolyze diubiquitin but, in vitro, inhibits the hydrolyzing activity on other substrates.

It localises to the cytoplasm. It catalyses the reaction Thiol-dependent hydrolysis of ester, thioester, amide, peptide and isopeptide bonds formed by the C-terminal Gly of ubiquitin (a 76-residue protein attached to proteins as an intracellular targeting signal).. Inhibited by monoubiquitin and diubiquitin. Deubiquitinating enzyme (DUB) that controls levels of cellular ubiquitin through processing of ubiquitin precursors and ubiquitinated proteins. Thiol protease that recognizes and hydrolyzes a peptide bond at the C-terminal glycine of either ubiquitin or NEDD8. Has a 10-fold preference for Arg and Lys at position P3''. Deubiquitinates ENAC in apical compartments, thereby regulating apical membrane recycling. Indirectly increases the phosphorylation of IGFIR, AKT and FOXO1 and promotes insulin-signaling and insulin-induced adipogenesis. Required for stress-response retinal, skeletal muscle and germ cell maintenance. May be involved in working memory. Can hydrolyze UBB(+1), a mutated form of ubiquitin which is not effectively degraded by the proteasome. This Bos taurus (Bovine) protein is Ubiquitin carboxyl-terminal hydrolase isozyme L3 (UCHL3).